The following is a 124-amino-acid chain: UPF0102 protein MSMEG_2508/MSMEI_2448 (124 aa).

It belongs to the UPF0102 family.

The chain is UPF0102 protein MSMEG_2508/MSMEI_2448 from Mycolicibacterium smegmatis (strain ATCC 700084 / mc(2)155) (Mycobacterium smegmatis).